A 386-amino-acid chain; its full sequence is Ribonucleoside-diphosphate reductase subunit M2 (386 aa).

Serine 20 is subject to Phosphoserine. Position 33 is a phosphothreonine (threonine 33). A Cy motif is present at residues arginine 49 to isoleucine 51. Fe cation-binding residues include aspartate 139, glutamate 170, and histidine 173. Tyrosine 177 is a catalytic residue. Positions 233, 267, and 270 each coordinate Fe cation.

Belongs to the ribonucleoside diphosphate reductase small chain family. As to quaternary structure, heterodimer of a large and a small subunit. Interacts (via Cy motif and when phosphorylated at Thr-33) with CCNF; the interaction occurs exclusively in G2 and early M. The cofactor is Fe cation. Phosphorylation on Ser-20 relieves the inhibitory effect on Wnt signaling. Phosphorylated on Thr-33 by CDK1 and CDK2; predominantly in G2 and M phase. Post-translationally, ubiquitinated by the SCF(CCNF) E3 ubiquitin-protein ligase complex; leading to its degradation by the proteasome.

It is found in the cytoplasm. The protein localises to the nucleus. The catalysed reaction is a 2'-deoxyribonucleoside 5'-diphosphate + [thioredoxin]-disulfide + H2O = a ribonucleoside 5'-diphosphate + [thioredoxin]-dithiol. Its function is as follows. Provides the precursors necessary for DNA synthesis. Catalyzes the biosynthesis of deoxyribonucleotides from the corresponding ribonucleotides. Inhibits Wnt signaling. This is Ribonucleoside-diphosphate reductase subunit M2 (RRM2) from Mesocricetus auratus (Golden hamster).